We begin with the raw amino-acid sequence, 295 residues long: Outer surface protein B (295 aa).

The first 16 residues, 1-16 (MKQYLLGFTLVFALIA), serve as a signal peptide directing secretion. The N-palmitoyl cysteine moiety is linked to residue Cys17. A lipid anchor (S-diacylglycerol cysteine) is attached at Cys17.

Its subcellular location is the cell outer membrane. In Borreliella burgdorferi (Lyme disease spirochete), this protein is Outer surface protein B (ospB).